Consider the following 331-residue polypeptide: Outer membrane lipoprotein PM1514 (331 aa).

Residues 1–20 (MQYFDIKKSLPVFCSLLITA) form the signal peptide. The N-palmitoyl cysteine moiety is linked to residue Cys-21. Cys-21 is lipidated: S-diacylglycerol cysteine.

Its subcellular location is the cell outer membrane. The protein resides in the cell surface. In Pasteurella multocida (strain Pm70), this protein is Outer membrane lipoprotein PM1514.